The chain runs to 205 residues: Holliday junction branch migration complex subunit RuvA (205 aa).

Residues 1-62 (MFEYVTGYVE…EDIMALYGFK (62 aa)) form a domain I region. The domain II stretch occupies residues 63–141 (TREERLLFTK…DVVPDAFVDL (79 aa)). The flexible linker stretch occupies residues 142–152 (FSDTESFDTKK). Residues 153-205 (GSSVELDEALEALRALGYAEREVSRVVPELLKESLTTDQYIKKALSLLLNGKR) are domain III.

The protein belongs to the RuvA family. In terms of assembly, homotetramer. Forms an RuvA(8)-RuvB(12)-Holliday junction (HJ) complex. HJ DNA is sandwiched between 2 RuvA tetramers; dsDNA enters through RuvA and exits via RuvB. An RuvB hexamer assembles on each DNA strand where it exits the tetramer. Each RuvB hexamer is contacted by two RuvA subunits (via domain III) on 2 adjacent RuvB subunits; this complex drives branch migration. In the full resolvosome a probable DNA-RuvA(4)-RuvB(12)-RuvC(2) complex forms which resolves the HJ.

It localises to the cytoplasm. Its function is as follows. The RuvA-RuvB-RuvC complex processes Holliday junction (HJ) DNA during genetic recombination and DNA repair, while the RuvA-RuvB complex plays an important role in the rescue of blocked DNA replication forks via replication fork reversal (RFR). RuvA specifically binds to HJ cruciform DNA, conferring on it an open structure. The RuvB hexamer acts as an ATP-dependent pump, pulling dsDNA into and through the RuvAB complex. HJ branch migration allows RuvC to scan DNA until it finds its consensus sequence, where it cleaves and resolves the cruciform DNA. The polypeptide is Holliday junction branch migration complex subunit RuvA (Bacillus mycoides (strain KBAB4) (Bacillus weihenstephanensis)).